A 156-amino-acid chain; its full sequence is Small ribosomal subunit protein uS7 (156 aa).

The protein belongs to the universal ribosomal protein uS7 family. Part of the 30S ribosomal subunit. Contacts proteins S9 and S11.

Functionally, one of the primary rRNA binding proteins, it binds directly to 16S rRNA where it nucleates assembly of the head domain of the 30S subunit. Is located at the subunit interface close to the decoding center, probably blocks exit of the E-site tRNA. This Cellvibrio japonicus (strain Ueda107) (Pseudomonas fluorescens subsp. cellulosa) protein is Small ribosomal subunit protein uS7.